The following is a 673-amino-acid chain: Acetate--CoA ligase [ADP-forming] II (673 aa).

One can recognise an ATP-grasp domain in the interval 9–45 (KALLEKYGIKTAKCIFCETEEQAVKAAKEIGFPVVMK). Position 35-46 (35-46 (AKEIGFPVVMKV)) interacts with ATP.

In the N-terminal section; belongs to the acetate CoA ligase beta subunit family. It in the C-terminal section; belongs to the acetate CoA ligase alpha subunit family. As to quaternary structure, homodimer.

The enzyme catalyses acetate + ATP + CoA = acetyl-CoA + ADP + phosphate. Activity requires divalent metal cations. Functionally, catalyzes the reversible conversion of a variety of acids to the corresponding acyl-CoA esters. Shows the highest activity with the aryl acids, indoleacetate and phenylacetate, as compared to acetate. In the reverse direction, phenylacetyl-CoA is the best substrate. Seems to be involved primarily in the degradation of aryl-CoA esters to the corresponding acids. Participates in the degradation of branched-chain amino acids via branched-chain-acyl-CoA esters. This Archaeoglobus fulgidus (strain ATCC 49558 / DSM 4304 / JCM 9628 / NBRC 100126 / VC-16) protein is Acetate--CoA ligase [ADP-forming] II.